The sequence spans 95 residues: MLKSNNTSEATTRKVGDKTAKKVFFRRRKGCPLSVPNAPVIDYKNPELLIKFVSEGGRMLPSRITNVCAKKQRKLNNAIKIARILALLPFVFQAK.

The protein belongs to the bacterial ribosomal protein bS18 family. In terms of assembly, part of the 30S ribosomal subunit. Forms a tight heterodimer with protein bS6.

Its function is as follows. Binds as a heterodimer with protein bS6 to the central domain of the 16S rRNA, where it helps stabilize the platform of the 30S subunit. The polypeptide is Small ribosomal subunit protein bS18 (Rickettsia canadensis (strain McKiel)).